Consider the following 97-residue polypeptide: Large ribosomal subunit protein bL27 (97 aa).

A propeptide spanning residues 1–12 (MIKLNLSNLQHF) is cleaved from the precursor. Residues 13–38 (AHKKGGGSTSNGRDSQAKRLGAKAAD) are disordered.

Belongs to the bacterial ribosomal protein bL27 family. In terms of processing, the N-terminus is cleaved by ribosomal processing cysteine protease Prp.

The polypeptide is Large ribosomal subunit protein bL27 (Streptococcus equi subsp. equi (strain 4047)).